Consider the following 235-residue polypeptide: Small ribosomal subunit protein uS3 (235 aa).

The 69-residue stretch at 39–107 folds into the KH type-2 domain; that stretch reads VRKFLNKELA…PAQINIAEVK (69 aa). The tract at residues 215 to 235 is disordered; that stretch reads AQSEQQPADKPKKAPRGKGRK.

Belongs to the universal ribosomal protein uS3 family. Part of the 30S ribosomal subunit. Forms a tight complex with proteins S10 and S14.

Binds the lower part of the 30S subunit head. Binds mRNA in the 70S ribosome, positioning it for translation. The chain is Small ribosomal subunit protein uS3 from Haemophilus influenzae (strain PittEE).